The chain runs to 96 residues: UPF0251 protein Shal_3723 (96 aa).

This sequence belongs to the UPF0251 family.

The polypeptide is UPF0251 protein Shal_3723 (Shewanella halifaxensis (strain HAW-EB4)).